Here is a 315-residue protein sequence, read N- to C-terminus: Taste receptor type 2 member 3 (315 aa).

At 1 to 5 (MGLTE) the chain is on the extracellular side. Residues 6-26 (GLFLILSGTQFALGILVNCFI) form a helical membrane-spanning segment. The Cytoplasmic portion of the chain corresponds to 27 to 41 (GLVNGSSWFKTKRMS). Residues 42–62 (LSDFIITTLAFLRIILLCIIL) form a helical membrane-spanning segment. The Extracellular portion of the chain corresponds to 63-93 (TDSFLIEFSPNAHDSGVIMQIIDVSWTFTNH). Residues 94–114 (LSIWLATCLGVLYCLKIASFS) form a helical membrane-spanning segment. At 115–127 (HPTFLWLKWRVSR) the chain is on the cytoplasmic side. Residues 128–148 (VMVWMLLGVLLLSCGSTASLI) traverse the membrane as a helical segment. The Extracellular segment spans residues 149–185 (NEFKLYSVFRGIEATXNVTEHFRKKRSEYYLIHVLGT). N165 carries an N-linked (GlcNAc...) asparagine glycan. The helical transmembrane segment at 186–206 (LWYLPPLIVSLAAYFLLIFSL) threads the bilayer. The Cytoplasmic segment spans residues 207–233 (GRHTRQMLQNGTSSRDPSTEAHKRAIR). The chain crosses the membrane as a helical span at residues 234-254 (IILSSFFLFLLYFLAFLIASF). Topologically, residues 255 to 265 (GNFLPKTKMAK) are extracellular. The helical transmembrane segment at 266–286 (MIGEVMTMFYPAGHSFILILG) threads the bilayer. The Cytoplasmic portion of the chain corresponds to 287 to 315 (NSKLKQTFVEMLRCESGHLKPGSKGPIFS).

Belongs to the G-protein coupled receptor T2R family.

It localises to the membrane. Its function is as follows. Gustducin-coupled receptor implicated in the perception of bitter compounds in the oral cavity and the gastrointestinal tract. Signals through PLCB2 and the calcium-regulated cation channel TRPM5. This Pongo pygmaeus (Bornean orangutan) protein is Taste receptor type 2 member 3 (TAS2R3).